Here is a 269-residue protein sequence, read N- to C-terminus: Nitrogen regulatory protein DAL80 (269 aa).

The GATA-type zinc-finger motif lies at 31 to 55; sequence CQNCFTVKTPLWRRDEHGTVLCNAC.

Its subcellular location is the nucleus. Functionally, negative regulator of multiple nitrogen catabolic genes including the allantoin pathway genes. In Saccharomyces cerevisiae (strain ATCC 204508 / S288c) (Baker's yeast), this protein is Nitrogen regulatory protein DAL80 (DAL80).